The following is a 354-amino-acid chain: UPF0421 protein BH2644 (354 aa).

The next 4 membrane-spanning stretches (helical) occupy residues 22 to 42 (AVCLTTAICMAFNLSPTFAVI), 60 to 80 (LIRLPAAALGAFFAVLSAYFF), 107 to 127 (TLVATLTAVAMIPSTTDHLFA), and 133 to 153 (VAGTSLGIMISTFVNFMILPP).

It belongs to the UPF0421 family.

The protein localises to the cell membrane. This Halalkalibacterium halodurans (strain ATCC BAA-125 / DSM 18197 / FERM 7344 / JCM 9153 / C-125) (Bacillus halodurans) protein is UPF0421 protein BH2644.